A 147-amino-acid polypeptide reads, in one-letter code: Putative pre-16S rRNA nuclease (147 aa).

This sequence belongs to the YqgF nuclease family.

It localises to the cytoplasm. In terms of biological role, could be a nuclease involved in processing of the 5'-end of pre-16S rRNA. This chain is Putative pre-16S rRNA nuclease, found in Ligilactobacillus salivarius (strain UCC118) (Lactobacillus salivarius).